The sequence spans 37 residues: Cytochrome b6-f complex subunit 5 (37 aa).

The chain crosses the membrane as a helical span at residues 5 to 25 (LLSGIVLGMITVSAFGLFVAA).

This sequence belongs to the PetG family. The 4 large subunits of the cytochrome b6-f complex are cytochrome b6, subunit IV (17 kDa polypeptide, PetD), cytochrome f and the Rieske protein, while the 4 small subunits are PetG, PetL, PetM and PetN. The complex functions as a dimer.

It localises to the plastid. The protein localises to the chloroplast thylakoid membrane. In terms of biological role, component of the cytochrome b6-f complex, which mediates electron transfer between photosystem II (PSII) and photosystem I (PSI), cyclic electron flow around PSI, and state transitions. PetG is required for either the stability or assembly of the cytochrome b6-f complex. This chain is Cytochrome b6-f complex subunit 5, found in Thalassiosira pseudonana (Marine diatom).